Here is a 397-residue protein sequence, read N- to C-terminus: MEREKVVLAYSGGLDTSVAIKWLMQKYSLDVITLTVDIGQGIDLNEIKNKAENLGVEKAYVLDLREEFIKDYIIPAIKSNAMYERVYPLATALSRPLIAKYLVKVAKENGAKYVAHGCTGKGNDQVRIDLGVKALAPDLEIIAPVREWNFSREEEIEYAIENNIPIPVSRKNPYSIDENLWGRSIEGGILEDPWQEPPEDIYLWTKLENKEPSYIEITFEKGIPVKLNGVEKDLVGLIEELNKIAGSYGIGRIDHIENRLVGIKSREIYEAPAALVIIKAHEALEDLVLPRELAHFKRMLEDKYAELVYYGLWFDPFREALQAFMDKTQERVTGKVKIKLIPWSFSIVGRDSPYSLYDHSLATYDKGSTFSTESAVGFIKLFGLQNYLYALKGGKNA.

ATP is bound at residue Ala9–Ser17. Tyr87 is a binding site for L-citrulline. Residue Gly117 coordinates ATP. The L-aspartate site is built by Thr119, Asn123, and Asp124. Residue Asn123 coordinates L-citrulline. Arg127, Ser175, Ser184, Glu257, and Tyr269 together coordinate L-citrulline.

It belongs to the argininosuccinate synthase family. Type 1 subfamily. As to quaternary structure, homotetramer.

Its subcellular location is the cytoplasm. The enzyme catalyses L-citrulline + L-aspartate + ATP = 2-(N(omega)-L-arginino)succinate + AMP + diphosphate + H(+). The protein operates within amino-acid biosynthesis; L-arginine biosynthesis; L-arginine from L-ornithine and carbamoyl phosphate: step 2/3. The protein is Argininosuccinate synthase of Dictyoglomus turgidum (strain DSM 6724 / Z-1310).